The sequence spans 316 residues: Putative metal-binding protein TP_0034 (316 aa).

A signal peptide spans 1-19 (MQRCSVVAALAGVVFLAQA). Residues H68, H146, and H210 each coordinate a divalent metal cation.

Belongs to the bacterial solute-binding protein 9 family.

The protein localises to the periplasm. Functionally, part of an ATP-binding cassette (ABC) transport system involved in metal import. Binds a metal with high affinity and specificity and delivers it to the membrane permease for translocation into the cytoplasm. This chain is Putative metal-binding protein TP_0034, found in Treponema pallidum (strain Nichols).